The following is a 632-amino-acid chain: MNSRIFPAAMSAPYAPLQPAVVVHDEQGRLYSAAYGDVYHSRDDAAGQAEHVFLRGNGLPQRWRGRARFTVCETGFGMGLNFLTLWQAWRDDPARPRRLHMLSLEGHPFAREDLLAVLRAHAPAGLQALATQLAAQWPPLLPGLHRLEFEGGALTLTLGFGAAQQLAPRLTARVDAYFLDGFAPRGNPAMWDPHMLQALARLAAPDATLASWCSAGQVRQALQQAGFAVRRAPGFGGKWHMTLGQRLPGVATPDDAPDDDGAPVLVVGAGLAGAAVAHALALRGRAVTVLDAARLAGLASHAGHAAAALTPVIARDDNPRARLSRAGSQRAWLRWRDLPAPAAPRRCGTVQLERDAGRAAALAQTLQILQFPADWVRMVDRDQAGALAGLPVARGGVFFADGMLVRPGALIDALLAGEGISTIAAQAARLRRHGAQWQVLDAQGRQVAQAPVVVLANAADAPRLLADSGLLEPLPRLARMHALAGEVTLLPAEALSGGPRCVVGGEGYLLPAVDGWCVAGSTYVHGAAQALTGAEGQRVNLDKAAGLLGQAPAAFASLQPGSLPGWAGWRAVLPGRLPAAGPLAHAPGLWLAAGYASRGLSWAALMGDVIAARLCGEPGPLETDLLAQIAPR.

The interval 1–247 (MNSRIFPAAM…KWHMTLGQRL (247 aa)) is tRNA (mnm(5)s(2)U34)-methyltransferase. The interval 267-632 (VGAGLAGAAV…TDLLAQIAPR (366 aa)) is FAD-dependent cmnm(5)s(2)U34 oxidoreductase.

In the N-terminal section; belongs to the methyltransferase superfamily. tRNA (mnm(5)s(2)U34)-methyltransferase family. It in the C-terminal section; belongs to the DAO family. Requires FAD as cofactor.

It is found in the cytoplasm. It catalyses the reaction 5-aminomethyl-2-thiouridine(34) in tRNA + S-adenosyl-L-methionine = 5-methylaminomethyl-2-thiouridine(34) in tRNA + S-adenosyl-L-homocysteine + H(+). In terms of biological role, catalyzes the last two steps in the biosynthesis of 5-methylaminomethyl-2-thiouridine (mnm(5)s(2)U) at the wobble position (U34) in tRNA. Catalyzes the FAD-dependent demodification of cmnm(5)s(2)U34 to nm(5)s(2)U34, followed by the transfer of a methyl group from S-adenosyl-L-methionine to nm(5)s(2)U34, to form mnm(5)s(2)U34. In Bordetella bronchiseptica (strain ATCC BAA-588 / NCTC 13252 / RB50) (Alcaligenes bronchisepticus), this protein is tRNA 5-methylaminomethyl-2-thiouridine biosynthesis bifunctional protein MnmC.